We begin with the raw amino-acid sequence, 308 residues long: GTPase Era (308 aa).

An Era-type G domain is found at 9-179; that stretch reads RAGFVALIGE…RAWLGASLPE (171 aa). Residues 17–24 form a G1 region; sequence GEPNAGKS. Position 17 to 24 (17 to 24) interacts with GTP; it reads GEPNAGKS. Positions 43-47 are G2; the sequence is QTTRA. The segment at 64-67 is G3; it reads DTPG. GTP is bound by residues 64-68 and 129-132; these read DTPGL and NKID. Residues 129-132 are G4; sequence NKID. The segment at 158–160 is G5; it reads ISA. Residues 210–287 enclose the KH type-2 domain; that stretch reads LHQELPYQLT…HLFLQVKVRP (78 aa).

Belongs to the TRAFAC class TrmE-Era-EngA-EngB-Septin-like GTPase superfamily. Era GTPase family. In terms of assembly, monomer.

The protein resides in the cytoplasm. It localises to the cell inner membrane. An essential GTPase that binds both GDP and GTP, with rapid nucleotide exchange. Plays a role in 16S rRNA processing and 30S ribosomal subunit biogenesis and possibly also in cell cycle regulation and energy metabolism. This Dinoroseobacter shibae (strain DSM 16493 / NCIMB 14021 / DFL 12) protein is GTPase Era.